The primary structure comprises 371 residues: Regulatory protein RapK (371 aa).

TPR repeat units follow at residues 7 to 42 (EVVA…FDEM), 93 to 130 (EYNF…IPDE), 175 to 208 (ATST…AKET), 215 to 248 (AQLF…ESWL), 254 to 290 (INSL…MENK), and 331 to 364 (DELS…EQKM).

The protein belongs to the Rap family.

The protein resides in the cytoplasm. Its activity is regulated as follows. Inhibited by PhrK, which prevents RapK-ComA interaction. Functionally, involved in the regulation of genetic competence development. Inhibits the activity of ComA, a transcriptional factor that regulates the development of genetic competence. Likely affects the activity of additional regulators, in particular Spo0A. This chain is Regulatory protein RapK (rapK), found in Bacillus subtilis (strain 168).